The chain runs to 211 residues: MPAVRIKICGITRVEDALAAAAAGADAIGLVFYAKSPRAVNIHRAREIVRALPPFVTSVGLFVNASRCELGEILDAVPLDLLQFHGDERAEDCEGHRRPYLKALRMKPGDDILARVADYPGAAGILLDTYVEGVPGGTGAAFDWSLVPAGLGKPLVLAGGLTANNVADAVARVQPYAVDVSGGVEASKGIKDAAKVRAFVDAVRSRGRDEA.

Belongs to the TrpF family.

It catalyses the reaction N-(5-phospho-beta-D-ribosyl)anthranilate = 1-(2-carboxyphenylamino)-1-deoxy-D-ribulose 5-phosphate. The protein operates within amino-acid biosynthesis; L-tryptophan biosynthesis; L-tryptophan from chorismate: step 3/5. The sequence is that of N-(5'-phosphoribosyl)anthranilate isomerase from Pseudomonas paraeruginosa (strain DSM 24068 / PA7) (Pseudomonas aeruginosa (strain PA7)).